Consider the following 404-residue polypeptide: Cysteine desulfurase IscS (404 aa).

Pyridoxal 5'-phosphate-binding positions include 75–76 (AT), Asn-155, Gln-183, and 203–205 (SAH). Residue Lys-206 is modified to N6-(pyridoxal phosphate)lysine. Residue Thr-243 participates in pyridoxal 5'-phosphate binding. Catalysis depends on Cys-328, which acts as the Cysteine persulfide intermediate. [2Fe-2S] cluster is bound at residue Cys-328.

The protein belongs to the class-V pyridoxal-phosphate-dependent aminotransferase family. NifS/IscS subfamily. In terms of assembly, homodimer. Forms a heterotetramer with IscU, interacts with other sulfur acceptors. Pyridoxal 5'-phosphate serves as cofactor.

It is found in the cytoplasm. The enzyme catalyses (sulfur carrier)-H + L-cysteine = (sulfur carrier)-SH + L-alanine. It functions in the pathway cofactor biosynthesis; iron-sulfur cluster biosynthesis. In terms of biological role, master enzyme that delivers sulfur to a number of partners involved in Fe-S cluster assembly, tRNA modification or cofactor biosynthesis. Catalyzes the removal of elemental sulfur atoms from cysteine to produce alanine. Functions as a sulfur delivery protein for Fe-S cluster synthesis onto IscU, an Fe-S scaffold assembly protein, as well as other S acceptor proteins. The protein is Cysteine desulfurase IscS of Pseudomonas fluorescens (strain Pf0-1).